The chain runs to 399 residues: Probable aspartate/prephenate aminotransferase (399 aa).

Residues glycine 39, tryptophan 125, and asparagine 175 each coordinate L-aspartate. Lysine 239 is modified (N6-(pyridoxal phosphate)lysine). An L-aspartate-binding site is contributed by arginine 375.

It belongs to the class-I pyridoxal-phosphate-dependent aminotransferase family. In terms of assembly, homodimer. Pyridoxal 5'-phosphate serves as cofactor.

It is found in the cytoplasm. The enzyme catalyses L-aspartate + 2-oxoglutarate = oxaloacetate + L-glutamate. It carries out the reaction L-arogenate + 2-oxoglutarate = prephenate + L-glutamate. In terms of biological role, catalyzes the reversible conversion of aspartate and 2-oxoglutarate to glutamate and oxaloacetate. Can also transaminate prephenate in the presence of glutamate. In Rickettsia bellii (strain RML369-C), this protein is Probable aspartate/prephenate aminotransferase (aatA).